A 191-amino-acid polypeptide reads, in one-letter code: Elongation factor P (191 aa).

The protein belongs to the elongation factor P family.

The protein resides in the cytoplasm. It participates in protein biosynthesis; polypeptide chain elongation. Its function is as follows. Involved in peptide bond synthesis. Stimulates efficient translation and peptide-bond synthesis on native or reconstituted 70S ribosomes in vitro. Probably functions indirectly by altering the affinity of the ribosome for aminoacyl-tRNA, thus increasing their reactivity as acceptors for peptidyl transferase. The polypeptide is Elongation factor P (Ralstonia pickettii (strain 12J)).